Consider the following 200-residue polypeptide: DNA dC-&gt;dU-editing enzyme APOBEC-3H (200 aa).

One can recognise a CMP/dCMP-type deaminase domain in the interval 4–126 (LTAETFRLQF…KPQQKGLRLL (123 aa)). Residue histidine 54 participates in Zn(2+) binding. The active-site Proton donor is glutamate 56. Residues cysteine 85 and cysteine 88 each contribute to the Zn(2+) site. A coiled-coil region spans residues 160–182 (YKMLEELDKNSRAIKRRLERIKI).

Belongs to the cytidine and deoxycytidylate deaminase family. In terms of assembly, homodimer. Interacts with AGO1, AGO2 and AGO3. Requires Zn(2+) as cofactor. In terms of processing, (Microbial infection) Following infection by some HIV-1 strains, such as isolate BRU/LAI, can be ubiquitinated by a cullin-5-RING E3 ubiquitin-protein ligase complex (ECS complex) hijacked by the HIV-1 Vif protein, leading to its degradation. Ubiquitination by the ECS complex is however less efficent compared to APOBEC3G or APOBEC3G. As to expression, expressed in lymphoid organs. Also detected in non-lymphoid tissues including lung, testis, ovary, fetal liver and skin.

It is found in the cytoplasm. Its subcellular location is the nucleus. The protein resides in the P-body. The enzyme catalyses a 2'-deoxycytidine in single-stranded DNA + H2O + H(+) = a 2'-deoxyuridine in single-stranded DNA + NH4(+). Its activity is regulated as follows. APOBEC3H activity is regulated by RNA. While RNA-binding inhibits the DNA deaminase activity, double-stranded RNA is required for HIV-1 restriction by promoting APOBEC3H homodimerization and packaging into retroviral nucleocapsids. With respect to regulation, (Microbial infection) Antiviral activity is inhibited to some extent by the HIV-1 virion infectivity factor (VIF), that prevents its incorporation into progeny virions by both inhibiting its translation and/or by inducing its ubiquitination and subsequent degradation by the 26S proteasome. Functionally, DNA deaminase (cytidine deaminase) which acts as an inhibitor of retrovirus replication and retrotransposon mobility via deaminase-dependent and -independent mechanisms. The A3H-var/haplotype 2 exhibits antiviral activity against vif-deficient HIV-1. After the penetration of retroviral nucleocapsids into target cells of infection and the initiation of reverse transcription, it can induce the conversion of cytosine to uracil in the minus-sense single-strand viral DNA, leading to G-to-A hypermutations in the subsequent plus-strand viral DNA. The resultant detrimental levels of mutations in the proviral genome, along with a deamination-independent mechanism that works prior to the proviral integration, together exert efficient antiretroviral effects in infected target cells. Selectively targets single-stranded DNA and does not deaminate double-stranded DNA or single- or double-stranded RNA. Exhibits antiviral activity also against T-cell leukemia virus type 1 (HTLV-1) and may inhibit the mobility of LTR and non-LTR retrotransposons. This is DNA dC-&gt;dU-editing enzyme APOBEC-3H from Homo sapiens (Human).